The following is a 338-amino-acid chain: GDSL esterase/lipase At5g63170 (338 aa).

A signal peptide spans 1-23 (MNSLVIQTTIVLVSVISVSIVHA). The active-site Nucleophile is Ser-35. Active-site residues include Asp-313 and His-316.

It belongs to the 'GDSL' lipolytic enzyme family.

It localises to the secreted. The protein is GDSL esterase/lipase At5g63170 of Arabidopsis thaliana (Mouse-ear cress).